A 414-amino-acid chain; its full sequence is 3-oxoacyl-[acyl-carrier-protein] synthase 2 (414 aa).

A Ketosynthase family 3 (KS3) domain is found at K3–R411. Catalysis depends on for beta-ketoacyl synthase activity residues C164, H304, and H341.

The protein belongs to the thiolase-like superfamily. Beta-ketoacyl-ACP synthases family. As to quaternary structure, homodimer.

The catalysed reaction is a fatty acyl-[ACP] + malonyl-[ACP] + H(+) = a 3-oxoacyl-[ACP] + holo-[ACP] + CO2. It catalyses the reaction (9Z)-hexadecenoyl-[ACP] + malonyl-[ACP] + H(+) = 3-oxo-(11Z)-octadecenoyl-[ACP] + holo-[ACP] + CO2. It participates in lipid metabolism; fatty acid biosynthesis. Functionally, involved in the type II fatty acid elongation cycle. Catalyzes the elongation of a wide range of acyl-ACP by the addition of two carbons from malonyl-ACP to an acyl acceptor. Can efficiently catalyze the conversion of palmitoleoyl-ACP (cis-hexadec-9-enoyl-ACP) to cis-vaccenoyl-ACP (cis-octadec-11-enoyl-ACP), an essential step in the thermal regulation of fatty acid composition. The polypeptide is 3-oxoacyl-[acyl-carrier-protein] synthase 2 (fabF) (Coxiella burnetii (strain RSA 493 / Nine Mile phase I)).